The sequence spans 243 residues: 2-O-methyltransferase NoeI (243 aa).

This sequence belongs to the FkbM methyltransferase family.

It is found in the cytoplasm. Required for 2-O-methylation of the fucosyl group of Nod factors. The sequence is that of 2-O-methyltransferase NoeI (noeI) from Sinorhizobium fredii (strain NBRC 101917 / NGR234).